A 157-amino-acid chain; its full sequence is Phosphopantetheine adenylyltransferase (157 aa).

Threonine 8 contributes to the substrate binding site. Residues 8–9 (TF) and histidine 16 contribute to the ATP site. Substrate is bound by residues lysine 40, threonine 72, and arginine 86. Residues 87–89 (GLR), glutamate 97, and 122–128 (YSFLSSS) each bind ATP.

The protein belongs to the bacterial CoaD family. In terms of assembly, homohexamer. It depends on Mg(2+) as a cofactor.

It is found in the cytoplasm. The catalysed reaction is (R)-4'-phosphopantetheine + ATP + H(+) = 3'-dephospho-CoA + diphosphate. The protein operates within cofactor biosynthesis; coenzyme A biosynthesis; CoA from (R)-pantothenate: step 4/5. In terms of biological role, reversibly transfers an adenylyl group from ATP to 4'-phosphopantetheine, yielding dephospho-CoA (dPCoA) and pyrophosphate. The sequence is that of Phosphopantetheine adenylyltransferase from Prochlorococcus marinus (strain MIT 9312).